Here is a 567-residue protein sequence, read N- to C-terminus: CTD small phosphatase-like protein 2 (567 aa).

3 disordered regions span residues 31 to 53, 100 to 150, and 280 to 361; these read QQQQ…HQCE, ASST…FSSV, and NKEN…EEFN. Composition is skewed to low complexity over residues 100 to 118, 130 to 150, and 286 to 297; these read ASST…SPLK, SMND…FSSV, and ESNNSNSNSNSS. The segment covering 298–308 has biased composition (polar residues); the sequence is PSFFHNLQQHP. Low complexity predominate over residues 309 to 332; that stretch reads TSAATTTTTTTTTITTTSATTSII. Acidic residues predominate over residues 337-360; the sequence is NSDDEIDDECDDESEEEEEDEEEF. Residues 386 to 544 form the FCP1 homology domain; it reads HSSPKISLVL…LQLVPFLESL (159 aa).

It belongs to the CTDSPL2 family.

Its function is as follows. Probable phosphatase. The polypeptide is CTD small phosphatase-like protein 2 (ctdspl2) (Dictyostelium discoideum (Social amoeba)).